Reading from the N-terminus, the 254-residue chain is Nickel import ATP-binding protein NikD (254 aa).

The 240-residue stretch at 2 to 241 folds into the ABC transporter domain; sequence PQQIELRDIA…PKHAVTRSLV (240 aa). 36-43 contributes to the ATP binding site; it reads GGSGSGKS.

The protein belongs to the ABC transporter superfamily. Nickel importer (TC 3.A.1.5.3) family. As to quaternary structure, the complex is composed of two ATP-binding proteins (NikD and NikE), two transmembrane proteins (NikB and NikC) and a solute-binding protein (NikA).

The protein resides in the cell inner membrane. The catalysed reaction is Ni(2+)(out) + ATP + H2O = Ni(2+)(in) + ADP + phosphate + H(+). In terms of biological role, part of the ABC transporter complex NikABCDE involved in nickel import. Responsible for energy coupling to the transport system. In Shigella dysenteriae serotype 1 (strain Sd197), this protein is Nickel import ATP-binding protein NikD.